The sequence spans 444 residues: Ubiquitin carboxyl-terminal hydrolase MINDY-3 (444 aa).

Cys-51 functions as the Nucleophile in the catalytic mechanism. Ser-124 carries the phosphoserine modification. The Proton acceptor role is filled by His-286.

Belongs to the MINDY deubiquitinase family. FAM188 subfamily. In terms of assembly, interacts with COPS5.

It localises to the nucleus. The catalysed reaction is Thiol-dependent hydrolysis of ester, thioester, amide, peptide and isopeptide bonds formed by the C-terminal Gly of ubiquitin (a 76-residue protein attached to proteins as an intracellular targeting signal).. Hydrolase that can remove 'Lys-48'-linked conjugated ubiquitin from proteins. The protein is Ubiquitin carboxyl-terminal hydrolase MINDY-3 of Mus musculus (Mouse).